Consider the following 94-residue polypeptide: Protein RnfH (94 aa).

The protein belongs to the UPF0125 (RnfH) family.

In Serratia proteamaculans (strain 568), this protein is Protein RnfH.